The sequence spans 508 residues: DNA polymerase II small subunit (508 aa).

Low complexity predominate over residues 66–80 (ASSAAQTSAPASTPP). The tract at residues 66–122 (ASSAAQTSAPASTPPDEATTHTDPSATDTPPNHDGGRAATADARSVEIDGDMTGAST) is disordered. Positions 86 to 95 (HTDPSATDTP) are enriched in polar residues.

The protein belongs to the DNA polymerase delta/II small subunit family. In terms of assembly, heterodimer of a large subunit and a small subunit.

The enzyme catalyses DNA(n) + a 2'-deoxyribonucleoside 5'-triphosphate = DNA(n+1) + diphosphate. It carries out the reaction Exonucleolytic cleavage in the 3'- to 5'-direction to yield nucleoside 5'-phosphates.. Functionally, possesses two activities: a DNA synthesis (polymerase) and an exonucleolytic activity that degrades single-stranded DNA in the 3' to 5' direction. Has a template-primer preference which is characteristic of a replicative DNA polymerase. The sequence is that of DNA polymerase II small subunit from Halobacterium salinarum (strain ATCC 29341 / DSM 671 / R1).